We begin with the raw amino-acid sequence, 510 residues long: D-alanine--D-alanyl carrier protein ligase (510 aa).

157–158 (TS) contributes to the ATP binding site. Asp202 provides a ligand contact to D-alanine. Residue 297–302 (NTYGPT) coordinates ATP. Val306 contacts D-alanine. Positions 389 and 498 each coordinate ATP. Lys498 contributes to the D-alanine binding site.

The protein belongs to the ATP-dependent AMP-binding enzyme family. DltA subfamily.

It localises to the cytoplasm. It catalyses the reaction holo-[D-alanyl-carrier protein] + D-alanine + ATP = D-alanyl-[D-alanyl-carrier protein] + AMP + diphosphate. It functions in the pathway cell wall biogenesis; lipoteichoic acid biosynthesis. Functionally, catalyzes the first step in the D-alanylation of lipoteichoic acid (LTA), the activation of D-alanine and its transfer onto the D-alanyl carrier protein (Dcp) DltC. In an ATP-dependent two-step reaction, forms a high energy D-alanyl-AMP intermediate, followed by transfer of the D-alanyl residue as a thiol ester to the phosphopantheinyl prosthetic group of the Dcp. D-alanylation of LTA plays an important role in modulating the properties of the cell wall in Gram-positive bacteria, influencing the net charge of the cell wall. This Listeria welshimeri serovar 6b (strain ATCC 35897 / DSM 20650 / CCUG 15529 / CIP 8149 / NCTC 11857 / SLCC 5334 / V8) protein is D-alanine--D-alanyl carrier protein ligase.